A 505-amino-acid chain; its full sequence is NADH-quinone oxidoreductase subunit N 1 (505 aa).

14 helical membrane-spanning segments follow: residues 18 to 38, 45 to 65, 84 to 104, 116 to 136, 138 to 158, 173 to 193, 223 to 243, 271 to 291, 292 to 312, 319 to 339, 345 to 365, 391 to 411, 429 to 449, and 473 to 493; these read LIPE…EMVL, LIAT…AWDF, YVGQ…SILA, IEFY…AQAN, FVLF…LVSY, LIMG…LYGV, FLAA…IGAF, AGFA…WWLV, QPVL…AALT, LIGL…IASH, VGAV…VFGV, FLAA…PLAG, GLLA…FGWI, and VGAA…LFGV.

Belongs to the complex I subunit 2 family. As to quaternary structure, NDH-1 is composed of 14 different subunits. Subunits NuoA, H, J, K, L, M, N constitute the membrane sector of the complex.

Its subcellular location is the cell inner membrane. The catalysed reaction is a quinone + NADH + 5 H(+)(in) = a quinol + NAD(+) + 4 H(+)(out). NDH-1 shuttles electrons from NADH, via FMN and iron-sulfur (Fe-S) centers, to quinones in the respiratory chain. The immediate electron acceptor for the enzyme in this species is believed to be ubiquinone. Couples the redox reaction to proton translocation (for every two electrons transferred, four hydrogen ions are translocated across the cytoplasmic membrane), and thus conserves the redox energy in a proton gradient. This chain is NADH-quinone oxidoreductase subunit N 1, found in Opitutus terrae (strain DSM 11246 / JCM 15787 / PB90-1).